The primary structure comprises 313 residues: Ribosomal RNA small subunit methyltransferase H (313 aa).

Residues 37 to 39 (GGH), Asp57, Phe83, Asp104, and Gln111 contribute to the S-adenosyl-L-methionine site.

This sequence belongs to the methyltransferase superfamily. RsmH family.

The protein resides in the cytoplasm. It catalyses the reaction cytidine(1402) in 16S rRNA + S-adenosyl-L-methionine = N(4)-methylcytidine(1402) in 16S rRNA + S-adenosyl-L-homocysteine + H(+). Functionally, specifically methylates the N4 position of cytidine in position 1402 (C1402) of 16S rRNA. In Mycoplasmoides gallisepticum (strain R(low / passage 15 / clone 2)) (Mycoplasma gallisepticum), this protein is Ribosomal RNA small subunit methyltransferase H.